We begin with the raw amino-acid sequence, 212 residues long: Uridine kinase (212 aa).

13–20 provides a ligand contact to ATP; that stretch reads GASASGKS.

It belongs to the uridine kinase family.

The protein resides in the cytoplasm. The enzyme catalyses uridine + ATP = UMP + ADP + H(+). The catalysed reaction is cytidine + ATP = CMP + ADP + H(+). The protein operates within pyrimidine metabolism; CTP biosynthesis via salvage pathway; CTP from cytidine: step 1/3. It participates in pyrimidine metabolism; UMP biosynthesis via salvage pathway; UMP from uridine: step 1/1. In Shewanella putrefaciens (strain CN-32 / ATCC BAA-453), this protein is Uridine kinase.